The sequence spans 294 residues: Store-operated calcium entry regulator STIMATE (294 aa).

A disordered region spans residues 1–22; the sequence is MQGPAGNASRGLPGGPPSTVAS. At 1 to 28 the chain is on the cytoplasmic side; that stretch reads MQGPAGNASRGLPGGPPSTVASGAGRCE. The next 3 helical transmembrane spans lie at 29–49, 69–89, and 102–122; these read SGALMHSFGIFLQGLLGVVAF, IWFLDTSKQAIGMLFIHFANV, and LYLINFLLDATVGMLLIYVGV. The GXXXG motif motif lies at 149-153; the sequence is GAWVG. Transmembrane regions (helical) follow at residues 156-176 and 194-214; these read ALYIVIMIFEKSVVFIVLLIL and LAIVMLIVPFFVNALMFWVVD. Over 215–294 the chain is Cytoplasmic; the sequence is NFLMRKGKTK…KKKHRFGLPV (80 aa). Positions 227–268 are disordered; sequence LEERGANQDSRNGSKVRYRRAASHEESESEILISADDEMEES. Residues 241–246 are required for localization in the endoplasmic reticulum; it reads KVRYRR.

It belongs to the STIMATE family. Homooligomer. Interacts with STIM1. In terms of tissue distribution, widely expressed.

It localises to the endoplasmic reticulum membrane. Functionally, acts as a regulator of store-operated Ca(2+) entry (SOCE) at junctional sites that connect the endoplasmic reticulum (ER) and plasma membrane (PM), called ER-plasma membrane (ER-PM) junction or cortical ER. SOCE is a Ca(2+) influx following depletion of intracellular Ca(2+) stores. Acts by interacting with STIM1, promoting STIM1 conformational switch. Involved in STIM1 relocalization to ER-PM junctions. Contributes to the maintenance and reorganization of store-dependent ER-PM junctions. The polypeptide is Store-operated calcium entry regulator STIMATE (Homo sapiens (Human)).